The following is a 211-amino-acid chain: Large ribosomal subunit protein uL4 (211 aa).

The segment at 42-73 (NNRQGTHSTKDRSEVRGGGIKPWAQKGTGRAR) is disordered.

The protein belongs to the universal ribosomal protein uL4 family. As to quaternary structure, part of the 50S ribosomal subunit.

In terms of biological role, one of the primary rRNA binding proteins, this protein initially binds near the 5'-end of the 23S rRNA. It is important during the early stages of 50S assembly. It makes multiple contacts with different domains of the 23S rRNA in the assembled 50S subunit and ribosome. Forms part of the polypeptide exit tunnel. The chain is Large ribosomal subunit protein uL4 from Leptospira biflexa serovar Patoc (strain Patoc 1 / Ames).